Reading from the N-terminus, the 333-residue chain is Protoheme IX farnesyltransferase (333 aa).

A run of 7 helical transmembrane segments spans residues 64–84, 110–130, 133–153, 161–181, 189–209, 246–266, and 287–307; these read LICTLGGGALAAAAAGALNCL, TVFLAAVSCTLAASMLLVSGV, LAAGLTLLGLFSYVILYTVIL, IVFGGVAGAIPPLVGASAATG, WLFGLVMLWTPAHFWALAILL, IMGVFALPEGGLLYGIMLLPF, and AKSLFRWSILYMFGICLLLLI.

Belongs to the UbiA prenyltransferase family. Protoheme IX farnesyltransferase subfamily.

It localises to the cell inner membrane. It catalyses the reaction heme b + (2E,6E)-farnesyl diphosphate + H2O = Fe(II)-heme o + diphosphate. It functions in the pathway porphyrin-containing compound metabolism; heme O biosynthesis; heme O from protoheme: step 1/1. Its function is as follows. Converts heme B (protoheme IX) to heme O by substitution of the vinyl group on carbon 2 of heme B porphyrin ring with a hydroxyethyl farnesyl side group. This Prochlorococcus marinus (strain MIT 9215) protein is Protoheme IX farnesyltransferase.